A 78-amino-acid polypeptide reads, in one-letter code: NAD(P)H-quinone oxidoreductase subunit O (78 aa).

Belongs to the complex I NdhO subunit family. As to quaternary structure, NDH-1 can be composed of about 15 different subunits; different subcomplexes with different compositions have been identified which probably have different functions.

The protein localises to the cellular thylakoid membrane. It catalyses the reaction a plastoquinone + NADH + (n+1) H(+)(in) = a plastoquinol + NAD(+) + n H(+)(out). The catalysed reaction is a plastoquinone + NADPH + (n+1) H(+)(in) = a plastoquinol + NADP(+) + n H(+)(out). In terms of biological role, NDH-1 shuttles electrons from an unknown electron donor, via FMN and iron-sulfur (Fe-S) centers, to quinones in the respiratory and/or the photosynthetic chain. The immediate electron acceptor for the enzyme in this species is believed to be plastoquinone. Couples the redox reaction to proton translocation, and thus conserves the redox energy in a proton gradient. Cyanobacterial NDH-1 also plays a role in inorganic carbon-concentration. This is NAD(P)H-quinone oxidoreductase subunit O from Prochlorococcus marinus (strain MIT 9301).